Consider the following 378-residue polypeptide: Ribosomal RNA large subunit methyltransferase G (378 aa).

Belongs to the methyltransferase superfamily. RlmG family.

It is found in the cytoplasm. It carries out the reaction guanosine(1835) in 23S rRNA + S-adenosyl-L-methionine = N(2)-methylguanosine(1835) in 23S rRNA + S-adenosyl-L-homocysteine + H(+). In terms of biological role, specifically methylates the guanine in position 1835 (m2G1835) of 23S rRNA. This is Ribosomal RNA large subunit methyltransferase G from Salmonella arizonae (strain ATCC BAA-731 / CDC346-86 / RSK2980).